A 596-amino-acid polypeptide reads, in one-letter code: MRVKKKNTTGNARNFVTRSQAVRKLQISLADFRRLCIFKGIYPREPRNKKKANKGSTAPTTFYYYKDIQYLQHEPVLAKFREHKTFAKKLTRALGRGEVSSAKKLEENKSHYKLDHIIKERYPSFADALRDLDDALNMLFLFANLPATDQVSTRVTKDAQELCNQWLALIARERLVRKVFVSIKGVYYQANVRGEEVRWLVPYKFPENIPSDVDFRIMLTFLEFYSTLLHFVLYKLYTDNGLVYPPKLDIKKNKLIGGISAYILESKDAPFLSSVDGSADSENQEVQVLDKKALRHAMKADDKAGSEADEGDADSNEQVTNIELDDFEDKNKNHGDILEQPSQYDSPTSTLFSEFVFYIGREVPVDILEFLIVSCGGSVISEAALDQADAANVDVSKVTHQLVDRPVVKNKVAGRTYIQPQWVFDSINKGELVPANLYLPGESLPPHLSPWGDSVGYDPAAELAEEEAESEEEEEVSDEAEGDEEATLAAEEDEEDEAEAEELRAQKELELEAQGVTYSEAADSAAPSKKASKQKKRKTEEEEEKDLKLIMMSNKQRKLFKKMKYSNQQKEQEIETLKQKKKQIAKTKAKLKKLEN.

The region spanning 347-440 (PTSTLFSEFV…ELVPANLYLP (94 aa)) is the BRCT domain. A disordered region spans residues 449-552 (SPWGDSVGYD…EEKDLKLIMM (104 aa)). Residues 460 to 596 (AAELAEEEAE…TKAKLKKLEN (137 aa)) are a coiled coil. A compositionally biased stretch (acidic residues) spans 463–500 (LAEEEAESEEEEEVSDEAEGDEEATLAAEEDEEDEAEA). The segment covering 501 to 510 (EELRAQKELE) has biased composition (basic and acidic residues). The span at 519 to 529 (SEAADSAAPSK) shows a compositional bias: low complexity.

This sequence belongs to the pescadillo family. As to quaternary structure, component of the NOP7 complex, composed of ERB1, NOP7 and YTM1. The complex is held together by ERB1, which interacts with NOP7 via its N-terminal domain and with YTM1 via a high-affinity interaction between the seven-bladed beta-propeller domains of the 2 proteins. The NOP7 complex associates with the 66S pre-ribosome.

The protein localises to the nucleus. It localises to the nucleolus. Its subcellular location is the nucleoplasm. Functionally, component of the NOP7 complex, which is required for maturation of the 25S and 5.8S ribosomal RNAs and formation of the 60S ribosome. The polypeptide is Pescadillo homolog (Eremothecium gossypii (strain ATCC 10895 / CBS 109.51 / FGSC 9923 / NRRL Y-1056) (Yeast)).